We begin with the raw amino-acid sequence, 159 residues long: Phosphopantetheine adenylyltransferase (159 aa).

Thr10 contacts substrate. ATP contacts are provided by residues 10 to 11 (TF) and His18. The substrate site is built by Lys42, Met74, and Arg88. ATP-binding positions include 89–91 (GLR), Glu99, and 124–130 (WSFISSS).

It belongs to the bacterial CoaD family. In terms of assembly, homohexamer. The cofactor is Mg(2+).

Its subcellular location is the cytoplasm. The catalysed reaction is (R)-4'-phosphopantetheine + ATP + H(+) = 3'-dephospho-CoA + diphosphate. It participates in cofactor biosynthesis; coenzyme A biosynthesis; CoA from (R)-pantothenate: step 4/5. Its function is as follows. Reversibly transfers an adenylyl group from ATP to 4'-phosphopantetheine, yielding dephospho-CoA (dPCoA) and pyrophosphate. This chain is Phosphopantetheine adenylyltransferase, found in Cronobacter sakazakii (strain ATCC BAA-894) (Enterobacter sakazakii).